The chain runs to 897 residues: 3'-5' exonuclease DinG (897 aa).

An Exonuclease domain is found at 8-161 (VVDLETTGNQ…DEDAATTAKL (154 aa)). Positions 241 to 496 (SKAVDQLGLT…KAIDQLEKQR (256 aa)) constitute a Helicase ATP-binding domain. 276–283 (ASLGSGKS) contributes to the ATP binding site. Residues 448–451 (DEAH) carry the DEAH box motif. The Helicase C-terminal domain maps to 703-893 (NIDEYVASIV…QFGKLLRQIQ (191 aa)).

The protein belongs to the helicase family. DinG subfamily. Type 2 sub-subfamily.

3'-5' exonuclease. This is 3'-5' exonuclease DinG from Staphylococcus aureus (strain USA300).